The primary structure comprises 485 residues: Pentatricopeptide repeat-containing protein At1g62720 (485 aa).

12 PPR repeats span residues 68–102 (SIVD…GIGH), 103–137 (DLYS…GYEP), 138–172 (DVVT…GFRP), 173–207 (DVVI…GVRA), 208–242 (DAVT…DIVP), 243–277 (NVIT…CVDP), 278–312 (DVFT…GCLP), 313–347 (DVVT…GLVG), 348–378 (DTIT…MDSR), 380–414 (NIRT…EIEL), 415–449 (DITT…GLKP), and 450–484 (DVVS…GLLP).

It belongs to the PPR family. P subfamily.

This Arabidopsis thaliana (Mouse-ear cress) protein is Pentatricopeptide repeat-containing protein At1g62720.